Reading from the N-terminus, the 149-residue chain is Small ribosomal subunit protein uS15 (149 aa).

The span at 1–14 (MGRMHTHRHGKSHS) shows a compositional bias: basic residues. The disordered stretch occupies residues 1-20 (MGRMHTHRHGKSHSIRPATL).

Belongs to the universal ribosomal protein uS15 family. In terms of assembly, part of the 30S ribosomal subunit.

The protein is Small ribosomal subunit protein uS15 of Nitrosopumilus maritimus (strain SCM1).